The following is a 393-amino-acid chain: Venom metalloproteinase BumaMPs1 (393 aa).

Residues 1–15 form the signal peptide; the sequence is MFVHLLVLLFAAVEA. An N-linked (GlcNAc...) asparagine glycan is attached at asparagine 158. Residues 167–377 enclose the Peptidase M12B domain; sequence KCVKIEYVFV…RVEELITRRK (211 aa). Histidine 323 lines the Zn(2+) pocket. Glutamate 324 is an active-site residue. Positions 327 and 333 each coordinate Zn(2+). Residues 378–393 form a disintegrin-like domain region; that stretch reads INHCIVETCDGKRKRN.

This sequence belongs to the venom metalloproteinase (M12B) family. Zn(2+) serves as cofactor. Contains several disulfide bonds. Expressed by the venom gland.

Its subcellular location is the secreted. Functionally, metalloprotease. The protein is Venom metalloproteinase BumaMPs1 of Olivierus martensii (Manchurian scorpion).